The primary structure comprises 112 residues: SPbeta prophage-derived uncharacterized protein YoqB (112 aa).

This is SPbeta prophage-derived uncharacterized protein YoqB (yoqB) from Bacillus subtilis (strain 168).